Consider the following 1096-residue polypeptide: MNSKYGDNIIDFLRYLEKFVKSLTKDNKIEEFKTFDIKSLLYPRNKDYFGNLSKFLLAVISARIGSNFINEDDIFEISELLKEFLGQELEHLPYLSYEELYVEIVEQVGEINGTVSEIIEAITVTIDFLDTFEKVSQTIDRSNEKQKLLAYLSAPVNQLDNSVSGVFNENDYTDIQRFFTELTNENNQSPDSNISILINDFQSLLNILESQQASSSSSKMIINDSPRTQQRNGTTEQQKKQQQQQYLQKNKEPFYSKDKIMQVSGPSYVFTPSDCNVSIQVGIPPDTLKRDQSICHFIVPHFLISKDVSLSEVEFPIFYNKFVQKGKTKVVIICTVEQKQRIETILCESIFGPAPEHIYTDEEITIPDYKIDLLTERLAIDPRANDEKLDSYVIFKTFDTFGVVDIDLPSASDPTKLINLRIRNTKGLISFHEDYHVVQKQLHLKLQEQQQDQQDKSSSSTTDKQMINTSGNRIILKNNTVSVIDSTIESQYVPVLPFGNDHEQVKKFKAPILGVTFLGVSHGLDFTHCSHTTGFIIWINGSGVVVDPPVGNTTYLQTNGIYGKTVEHIILTHCHADHDSGILQKIIERNKVTLYTTKTINESYMRKLKALTGLPEQSLKNYYTWVPVTIGNKIKILGAEFEFDYSFHVIPTIRFKLEIYNKKISYSADTFYDLQKFKQLKDQGVLSKKRIERLKSFVFDADMIIHESGVAPIHTPMANLLELPSEIRKKIRVVHCSSSVDTKGEIIRPKEGLENTEIIKVDRKYKGVAECIQIQTALNHCSVFSKLSPAEVQRVFFLCKKIWVKRNDVIIKKGSPSDMFYIILSGKVLVYENEYEPIKSTTSVGTVVTDTTTITTTVKTDAIKIPTIKLCAGETLGESALQLDKNIDASATVIAETDVCLLVWKTMDLRTEFHSNLNTFISKVHMDLSHINSCRDAIIRAFQHNITQHINKEEVDSIANGSKDVSFAHHQVIFNEGDTSDSMYIIKQGRVRIHSKKNKNIIRYLNVGDFFGETAYRRSNEDSNFLPTRSFTATAIDPTILLKLDIESIVNPRIQNIIEQKAKKNAEDNIRYHAYSPKIRTPRTPRKVYPIEGLSI.

The interval 216-248 (SSSKMIINDSPRTQQRNGTTEQQKKQQQQQYLQ) is disordered. Polar residues predominate over residues 225-236 (SPRTQQRNGTTE). A divalent metal cation contacts are provided by His573, His575, and Asp577. A nucleoside 3',5'-cyclic phosphate-binding positions include 783–930 (VFSK…DLSH) and 946–1070 (ITQH…EDNI).

The protein belongs to the metallo-beta-lactamase superfamily. cNMP phosphodiesterase family. Mn(2+) serves as cofactor. Requires Mg(2+) as cofactor. The cofactor is Zn(2+).

The protein localises to the cytoplasm. Its subcellular location is the cytosol. The enzyme catalyses 3',5'-cyclic AMP + H2O = AMP + H(+). The catalysed reaction is 3',5'-cyclic GMP + H2O = GMP + H(+). Its function is as follows. Dual specificity cAMP and cGMP phosphodiesterase with marked preference for cyclic AMP, which is activated by cAMP and cGMP. Likely functions as a cAMP-stimulated cAMP-phosphodiesterase which may play a role in regulating the cAMP relay response. In Dictyostelium discoideum (Social amoeba), this protein is cAMP/cGMP-dependent 3',5'-cAMP/cGMP phosphodiesterase B (pdeE).